Reading from the N-terminus, the 84-residue chain is MAHKKGASSTRNGRDSNAQRLGVKRFGGQVVGAGEIIVRQRGTHFHPGVNVGRGGDDTLFALSAGSVQFGVKGGRKVVNIVVPA.

The tract at residues 1-21 is disordered; that stretch reads MAHKKGASSTRNGRDSNAQRL. Polar residues predominate over residues 7 to 19; it reads ASSTRNGRDSNAQ.

It belongs to the bacterial ribosomal protein bL27 family.

This chain is Large ribosomal subunit protein bL27, found in Clavibacter michiganensis subsp. michiganensis (strain NCPPB 382).